The sequence spans 702 residues: Polyribonucleotide nucleotidyltransferase (702 aa).

Residues D485 and D491 each contribute to the Mg(2+) site. The KH domain occupies 552–611 (PKTSTLQIDPEKIRDVIGAGGKVINKIIADTGVKIDIKEDGLVYVSSAESEGVKEAVKII). The S1 motif domain occupies 621–689 (GEIYLGKVTK…SQGRINLSRK (69 aa)).

It belongs to the polyribonucleotide nucleotidyltransferase family. Mg(2+) serves as cofactor.

The protein localises to the cytoplasm. It carries out the reaction RNA(n+1) + phosphate = RNA(n) + a ribonucleoside 5'-diphosphate. Involved in mRNA degradation. Catalyzes the phosphorolysis of single-stranded polyribonucleotides processively in the 3'- to 5'-direction. The sequence is that of Polyribonucleotide nucleotidyltransferase from Clostridium perfringens (strain 13 / Type A).